Here is a 650-residue protein sequence, read N- to C-terminus: Peroxisomal biogenesis factor 8 (650 aa).

The Microbody targeting signal signature appears at 648–650 (AKL).

The protein resides in the peroxisome matrix. In terms of biological role, essential for peroxisome biogenesis. May play a role in triggering the protein import competence of individual peroxisomes. It may interact with PEX10. The chain is Peroxisomal biogenesis factor 8 (PEX8) from Pichia angusta (Yeast).